Consider the following 518-residue polypeptide: Prosaposin (518 aa).

The signal sequence occupies residues 1–17 (MARRLLTLLGLLAAAVA). A propeptide spanning residues 18 to 60 (SPVLWQKDCAKGPEVWCQSLRTASQCGAVKHCQQNVWSKPAVN) is cleaved from the precursor. The Saposin A-type 1 domain occupies 19–59 (PVLWQKDCAKGPEVWCQSLRTASQCGAVKHCQQNVWSKPAV). 4 consecutive Saposin B-type domains span residues 60 to 143 (NSIP…QSLQ), 193 to 277 (TEDV…PSVK), 307 to 388 (TFSV…AANK), and 399 to 480 (AGGF…GAAK). 3 disulfide bridges follow: cysteine 64–cysteine 139, cysteine 67–cysteine 133, and cysteine 95–cysteine 107. An N-linked (GlcNAc...) asparagine glycan is attached at asparagine 81. Positions 144-193 (KHLAAMKLQKQLQSNKIPELDFSELTSPFMANVPLLLYPQDKPKQKSKAT) are excised as a propeptide. Intrachain disulfides connect cysteine 197/cysteine 273, cysteine 200/cysteine 267, and cysteine 229/cysteine 240. An N-linked (GlcNAc...) asparagine glycan is attached at asparagine 214. A propeptide spanning residues 277-306 (KSVPLQTLVPAQVVHEVKMETVEKATVQEK) is cleaved from the precursor. 3 disulfide bridges follow: cysteine 311–cysteine 384, cysteine 314–cysteine 378, and cysteine 342–cysteine 353. Residue asparagine 328 is glycosylated (N-linked (GlcNAc...) asparagine). A propeptide spanning residues 388–398 (KPPQQPVVVKP) is cleaved from the precursor. 3 disulfides stabilise this stretch: cysteine 403–cysteine 476, cysteine 406–cysteine 470, and cysteine 434–cysteine 445. Asparagine 420 is a glycosylation site (N-linked (GlcNAc...) asparagine). The propeptide occupies 480–518 (KKPLLGEDACVWGPGYWCKNMETAAQCNAVDHCRRHVWN). Residues 482-518 (PLLGEDACVWGPGYWCKNMETAAQCNAVDHCRRHVWN) form the Saposin A-type 2 domain.

As to quaternary structure, saposin-B is a homodimer. In terms of processing, this precursor is proteolytically processed to 4 small peptides, which are similar to each other and are sphingolipid hydrolase activator proteins.

Its subcellular location is the lysosome. It localises to the secreted. In terms of biological role, the lysosomal degradation of sphingolipids takes place by the sequential action of specific hydrolases. Some of these enzymes require specific low-molecular mass, non-enzymatic proteins: the sphingolipids activator proteins (coproteins). Saposin-A and saposin-C stimulate the hydrolysis of glucosylceramide by beta-glucosylceramidase (EC 3.2.1.45) and galactosylceramide by beta-galactosylceramidase (EC 3.2.1.46). Saposin-C apparently acts by combining with the enzyme and acidic lipid to form an activated complex, rather than by solubilizing the substrate. Functionally, saposin-B stimulates the hydrolysis of galacto-cerebroside sulfate by arylsulfatase A (EC 3.1.6.8), GM1 gangliosides by beta-galactosidase (EC 3.2.1.23) and globotriaosylceramide by alpha-galactosidase A (EC 3.2.1.22). Saposin-B forms a solubilizing complex with the substrates of the sphingolipid hydrolases. Its function is as follows. Saposin-D is a specific sphingomyelin phosphodiesterase activator (EC 3.1.4.12). This Gallus gallus (Chicken) protein is Prosaposin (PSAP).